The chain runs to 714 residues: Polyribonucleotide nucleotidyltransferase (714 aa).

Residues aspartate 488 and aspartate 494 each contribute to the Mg(2+) site. Positions 555–614 constitute a KH domain; the sequence is PRIEVMNIPTDKIRDVIGSGGKVIREIVEKTGAKINIEDDGTVKIASSNGKEIEAAKKWI. Residues 624 to 692 enclose the S1 motif domain; the sequence is GEIYEGTVVK…ERGKVRLSMK (69 aa).

Belongs to the polyribonucleotide nucleotidyltransferase family. Requires Mg(2+) as cofactor.

Its subcellular location is the cytoplasm. The enzyme catalyses RNA(n+1) + phosphate = RNA(n) + a ribonucleoside 5'-diphosphate. Involved in mRNA degradation. Catalyzes the phosphorolysis of single-stranded polyribonucleotides processively in the 3'- to 5'-direction. The protein is Polyribonucleotide nucleotidyltransferase of Brucella abortus biovar 1 (strain 9-941).